The chain runs to 868 residues: Rifampicin phosphotransferase (868 aa).

Residues 1–313 (MSSFVLDFQE…IYIVQSRPIT (313 aa)) form an ATP-binding region. Positions 22, 116, 131, 135, 182, 296, 308, and 310 each coordinate ATP. Positions 326 to 756 (NHVYISVGHQ…TSDGEIITGK (431 aa)) are rifampicin-binding. Residues 769–867 (GLPVSSGVVE…VHGTEGYIEV (99 aa)) are swivel phosphohistidine. His827 serves as the catalytic Tele-phosphohistidine intermediate.

This sequence belongs to the rifampicin phosphotransferase family.

The catalysed reaction is rifampicin + ATP + H2O = 21-phosphorifampicin + AMP + phosphate + 2 H(+). Catalyzes the phosphorylation of rifampicin, also known as rifampin (RIF), leading to its inactivation. Confers high level resistance to a variety of clinically used rifamycin antibiotics. Does not show phosphoenolpyruvate (PEP) synthase activity. This is Rifampicin phosphotransferase from Bacillus cereus (strain ATCC 14579 / DSM 31 / CCUG 7414 / JCM 2152 / NBRC 15305 / NCIMB 9373 / NCTC 2599 / NRRL B-3711).